We begin with the raw amino-acid sequence, 261 residues long: Carnitinyl-CoA dehydratase (261 aa).

Glu111 serves as the catalytic Nucleophile. Glu131 (proton acceptor) is an active-site residue.

The protein belongs to the enoyl-CoA hydratase/isomerase family.

The catalysed reaction is (R)-carnitinyl-CoA = crotonobetainyl-CoA + H2O. It functions in the pathway amine and polyamine metabolism; carnitine metabolism. Functionally, catalyzes the reversible dehydration of L-carnitinyl-CoA to crotonobetainyl-CoA. The protein is Carnitinyl-CoA dehydratase of Escherichia coli O6:K15:H31 (strain 536 / UPEC).